A 351-amino-acid chain; its full sequence is MSDKLAARERFLDVFEDLVEELKQILVSYNMPQEAIEWFVRSLNYNTPGGKLNRGLSVVDTFAILNNTTSDKLNDTEYKKVALLGWAIELLQAYFLVADDMMDQSKTRRGQPCWYLVEGVNNIAINDSFMLEGAIYILLKKHFRQDPYYVDLLDLFHEVTFQTELGQLLDLITADEEIVDLDKFSLEKHSFIVIFKTAYYSFYLPVALAMYMSGINDEKDLKQVRDILIPLGEYFQIQDDYLDCFGTPEQIGKIGTDIKDNKCSWVINQALLIATPEQRQLLDNNYGKKDDESEQKCKDLFKQLGIEKIYHDYEESIVAKLRKQIDQIDESRGLKKDVLTAFLGKVYKRSK.

Lys51, Arg54, and Gln92 together coordinate isopentenyl diphosphate. Residues Asp99 and Asp103 each contribute to the Mg(2+) site. Arg108 provides a ligand contact to dimethylallyl diphosphate. Arg109 is an isopentenyl diphosphate binding site. Lys196, Thr197, Gln236, Lys253, and Lys262 together coordinate dimethylallyl diphosphate.

The protein belongs to the FPP/GGPP synthase family. Requires Mg(2+) as cofactor.

It carries out the reaction isopentenyl diphosphate + dimethylallyl diphosphate = (2E)-geranyl diphosphate + diphosphate. The enzyme catalyses isopentenyl diphosphate + (2E)-geranyl diphosphate = (2E,6E)-farnesyl diphosphate + diphosphate. Its pathway is isoprenoid biosynthesis; farnesyl diphosphate biosynthesis; farnesyl diphosphate from geranyl diphosphate and isopentenyl diphosphate: step 1/1. It participates in isoprenoid biosynthesis; geranyl diphosphate biosynthesis; geranyl diphosphate from dimethylallyl diphosphate and isopentenyl diphosphate: step 1/1. Functionally, farnesyl pyrophosphate synthase; part of the second module of ergosterol biosynthesis pathway that includes the middle steps of the pathway. ERG20 catalyzes the sequential condensation of isopentenyl pyrophosphate with dimethylallyl pyrophosphate, and then with the resultant geranylpyrophosphate to the ultimate product farnesyl pyrophosphate. The second module is carried out in the vacuole and involves the formation of farnesyl diphosphate, which is also an important intermediate in the biosynthesis of ubiquinone, dolichol, heme and prenylated proteins. Activity by the mevalonate kinase ERG12 first converts mevalonate into 5-phosphomevalonate. 5-phosphomevalonate is then further converted to 5-diphosphomevalonate by the phosphomevalonate kinase ERG8. The diphosphomevalonate decarboxylase MVD then produces isopentenyl diphosphate. The isopentenyl-diphosphate delta-isomerase IDI1 then catalyzes the 1,3-allylic rearrangement of the homoallylic substrate isopentenyl (IPP) to its highly electrophilic allylic isomer, dimethylallyl diphosphate (DMAPP). Finally the farnesyl diphosphate synthase ERG20 catalyzes the sequential condensation of isopentenyl pyrophosphate with dimethylallyl pyrophosphate, and then with the resultant geranylpyrophosphate to the ultimate product farnesyl pyrophosphate. The sequence is that of Farnesyl pyrophosphate synthase from Candida albicans (strain SC5314 / ATCC MYA-2876) (Yeast).